Reading from the N-terminus, the 268-residue chain is MSRFETQFATLNAKNEGAFVPFVTLCDPTFDRSFEIICTLVDNGADALELGFPFSDPLLDGPVIQAANNRALTAGHSSEDSFKLLEKVRSKYPEIPISLLLCANLIFAKGLDAFYQRCAEVGVDAVLVADIPLLAKEDYVQAAKKHGIQPVFICPPNADEKTIQGVAKNSEGYTYLVSRAGVTSAENQAHAANLDTLVEQLKAHNAPPILQGFGIAQPAQVKEALALGAAGAISGSATVKIIERNLDNHEQCLAELAEFVQTMKAATK.

Catalysis depends on proton acceptor residues Glu-49 and Asp-60.

This sequence belongs to the TrpA family. Tetramer of two alpha and two beta chains.

It catalyses the reaction (1S,2R)-1-C-(indol-3-yl)glycerol 3-phosphate + L-serine = D-glyceraldehyde 3-phosphate + L-tryptophan + H2O. It functions in the pathway amino-acid biosynthesis; L-tryptophan biosynthesis; L-tryptophan from chorismate: step 5/5. Its function is as follows. The alpha subunit is responsible for the aldol cleavage of indoleglycerol phosphate to indole and glyceraldehyde 3-phosphate. This Haemophilus influenzae (strain PittEE) protein is Tryptophan synthase alpha chain.